A 212-amino-acid polypeptide reads, in one-letter code: uncharacterized protein (212 aa).

S-adenosyl-L-methionine-binding residues include G53, E74, and D97.

This sequence belongs to the methyltransferase superfamily. YrrT family.

In terms of biological role, could be a S-adenosyl-L-methionine-dependent methyltransferase. This is an uncharacterized protein from Bacillus mycoides (strain KBAB4) (Bacillus weihenstephanensis).